The primary structure comprises 174 residues: NADH-quinone oxidoreductase subunit C (174 aa).

This sequence belongs to the complex I 30 kDa subunit family. NDH-1 is composed of 14 different subunits. Subunits NuoB, C, D, E, F, and G constitute the peripheral sector of the complex.

Its subcellular location is the cell membrane. The catalysed reaction is a quinone + NADH + 5 H(+)(in) = a quinol + NAD(+) + 4 H(+)(out). NDH-1 shuttles electrons from NADH, via FMN and iron-sulfur (Fe-S) centers, to quinones in the respiratory chain. The immediate electron acceptor for the enzyme in this species is believed to be ubiquinone. Couples the redox reaction to proton translocation (for every two electrons transferred, four hydrogen ions are translocated across the cytoplasmic membrane), and thus conserves the redox energy in a proton gradient. The protein is NADH-quinone oxidoreductase subunit C of Roseiflexus castenholzii (strain DSM 13941 / HLO8).